The chain runs to 503 residues: UDP-N-acetylmuramoylalanine--D-glutamate ligase (503 aa).

129–135 (GTNGKTT) lines the ATP pocket.

It belongs to the MurCDEF family.

It localises to the cytoplasm. It carries out the reaction UDP-N-acetyl-alpha-D-muramoyl-L-alanine + D-glutamate + ATP = UDP-N-acetyl-alpha-D-muramoyl-L-alanyl-D-glutamate + ADP + phosphate + H(+). It participates in cell wall biogenesis; peptidoglycan biosynthesis. Cell wall formation. Catalyzes the addition of glutamate to the nucleotide precursor UDP-N-acetylmuramoyl-L-alanine (UMA). The protein is UDP-N-acetylmuramoylalanine--D-glutamate ligase of Burkholderia multivorans (strain ATCC 17616 / 249).